Reading from the N-terminus, the 83-residue chain is Small ribosomal subunit protein uS17 (83 aa).

It belongs to the universal ribosomal protein uS17 family. As to quaternary structure, part of the 30S ribosomal subunit.

In terms of biological role, one of the primary rRNA binding proteins, it binds specifically to the 5'-end of 16S ribosomal RNA. In Campylobacter concisus (strain 13826), this protein is Small ribosomal subunit protein uS17.